Reading from the N-terminus, the 440-residue chain is Ribulose bisphosphate carboxylase large chain (440 aa).

Residue lysine 4 is modified to N6,N6,N6-trimethyllysine. Asparagine 113 and threonine 163 together coordinate substrate. Lysine 165 functions as the Proton acceptor in the catalytic mechanism. Lysine 167 provides a ligand contact to substrate. The Mg(2+) site is built by lysine 191, aspartate 193, and glutamate 194. N6-carboxylysine is present on lysine 191. Histidine 284 acts as the Proton acceptor in catalysis. 3 residues coordinate substrate: arginine 285, histidine 317, and serine 369.

This sequence belongs to the RuBisCO large chain family. Type I subfamily. Heterohexadecamer of 8 large chains and 8 small chains; disulfide-linked. The disulfide link is formed within the large subunit homodimers. It depends on Mg(2+) as a cofactor. Post-translationally, the disulfide bond which can form in the large chain dimeric partners within the hexadecamer appears to be associated with oxidative stress and protein turnover.

The protein localises to the plastid. It localises to the chloroplast. The enzyme catalyses 2 (2R)-3-phosphoglycerate + 2 H(+) = D-ribulose 1,5-bisphosphate + CO2 + H2O. The catalysed reaction is D-ribulose 1,5-bisphosphate + O2 = 2-phosphoglycolate + (2R)-3-phosphoglycerate + 2 H(+). Its function is as follows. RuBisCO catalyzes two reactions: the carboxylation of D-ribulose 1,5-bisphosphate, the primary event in carbon dioxide fixation, as well as the oxidative fragmentation of the pentose substrate in the photorespiration process. Both reactions occur simultaneously and in competition at the same active site. The chain is Ribulose bisphosphate carboxylase large chain from Polystichum munitum (Western sword-fern).